A 678-amino-acid polypeptide reads, in one-letter code: Glycine--tRNA ligase beta subunit (678 aa).

It belongs to the class-II aminoacyl-tRNA synthetase family. Tetramer of two alpha and two beta subunits.

It localises to the cytoplasm. The enzyme catalyses tRNA(Gly) + glycine + ATP = glycyl-tRNA(Gly) + AMP + diphosphate. In Sulfurihydrogenibium sp. (strain YO3AOP1), this protein is Glycine--tRNA ligase beta subunit.